The sequence spans 340 residues: Uroporphyrinogen decarboxylase (340 aa).

Substrate contacts are provided by residues 21 to 25 (RQAGR), Asp71, Tyr148, Ser203, and His316.

It belongs to the uroporphyrinogen decarboxylase family. Homodimer.

The protein localises to the cytoplasm. It catalyses the reaction uroporphyrinogen III + 4 H(+) = coproporphyrinogen III + 4 CO2. The protein operates within porphyrin-containing compound metabolism; protoporphyrin-IX biosynthesis; coproporphyrinogen-III from 5-aminolevulinate: step 4/4. In terms of biological role, catalyzes the decarboxylation of four acetate groups of uroporphyrinogen-III to yield coproporphyrinogen-III. This is Uroporphyrinogen decarboxylase from Campylobacter jejuni (strain RM1221).